The following is a 304-amino-acid chain: Small glutamine-rich tetratricopeptide repeat-containing protein beta (304 aa).

4 TPR repeats span residues L15 to D49, A85 to N118, V120 to Y152, and S153 to N186. The residue at position 131 (K131) is an N6-acetyllysine. 3 positions are modified to phosphoserine: S293, S295, and S297.

This sequence belongs to the SGT family. As to quaternary structure, homooligomerize. Expressed specifically in brain.

Functionally, co-chaperone that binds directly to HSC70 and HSP70 and regulates their ATPase activity. The protein is Small glutamine-rich tetratricopeptide repeat-containing protein beta (Sgtb) of Rattus norvegicus (Rat).